A 223-amino-acid chain; its full sequence is Phosphoribosylformylglycinamidine synthase subunit PurQ (223 aa).

Positions 3 to 223 (FAVLVFPGSN…MVKSWREQHV (221 aa)) constitute a Glutamine amidotransferase type-1 domain. Catalysis depends on Cys85, which acts as the Nucleophile. Active-site residues include His193 and Glu195.

As to quaternary structure, part of the FGAM synthase complex composed of 1 PurL, 1 PurQ and 2 PurS subunits.

The protein localises to the cytoplasm. The enzyme catalyses N(2)-formyl-N(1)-(5-phospho-beta-D-ribosyl)glycinamide + L-glutamine + ATP + H2O = 2-formamido-N(1)-(5-O-phospho-beta-D-ribosyl)acetamidine + L-glutamate + ADP + phosphate + H(+). It carries out the reaction L-glutamine + H2O = L-glutamate + NH4(+). The protein operates within purine metabolism; IMP biosynthesis via de novo pathway; 5-amino-1-(5-phospho-D-ribosyl)imidazole from N(2)-formyl-N(1)-(5-phospho-D-ribosyl)glycinamide: step 1/2. Its function is as follows. Part of the phosphoribosylformylglycinamidine synthase complex involved in the purines biosynthetic pathway. Catalyzes the ATP-dependent conversion of formylglycinamide ribonucleotide (FGAR) and glutamine to yield formylglycinamidine ribonucleotide (FGAM) and glutamate. The FGAM synthase complex is composed of three subunits. PurQ produces an ammonia molecule by converting glutamine to glutamate. PurL transfers the ammonia molecule to FGAR to form FGAM in an ATP-dependent manner. PurS interacts with PurQ and PurL and is thought to assist in the transfer of the ammonia molecule from PurQ to PurL. The sequence is that of Phosphoribosylformylglycinamidine synthase subunit PurQ from Staphylococcus aureus (strain bovine RF122 / ET3-1).